The sequence spans 301 residues: Glycine--tRNA ligase alpha subunit (301 aa).

Belongs to the class-II aminoacyl-tRNA synthetase family. As to quaternary structure, tetramer of two alpha and two beta subunits.

The protein localises to the cytoplasm. The enzyme catalyses tRNA(Gly) + glycine + ATP = glycyl-tRNA(Gly) + AMP + diphosphate. The protein is Glycine--tRNA ligase alpha subunit of Variovorax paradoxus (strain S110).